The sequence spans 687 residues: uncharacterized protein (687 aa).

Residues 277–295 (SVCSSQSFSSGQSDISMSS) show a composition bias toward low complexity. 3 disordered regions span residues 277-337 (SVCS…QDCD), 342-361 (DTESVANEPEPYSSTMSEMP), and 531-564 (HVEQAGGDYSSSGQKDQKKKRGKRPVSNPPPSLI). Residues 300 to 313 (NGSSVGNGSLSPMT) show a composition bias toward polar residues.

This is an uncharacterized protein from Caenorhabditis elegans.